Reading from the N-terminus, the 461-residue chain is 3-deoxy-D-manno-octulosonic acid transferase (461 aa).

A helical; Signal-anchor membrane pass occupies residues M2–I22. One can recognise an RPE1 insert domain in the interval S47–Y88. The Proton acceptor role is filled by E102. Residues P306–R307, F347–E349, and N372–E375 each bind CMP.

It belongs to the glycosyltransferase group 1 family. Glycosyltransferase 30 subfamily.

Its subcellular location is the cell inner membrane. It catalyses the reaction lipid IVA (E. coli) + CMP-3-deoxy-beta-D-manno-octulosonate = alpha-Kdo-(2-&gt;6)-lipid IVA (E. coli) + CMP + H(+). It participates in bacterial outer membrane biogenesis; LPS core biosynthesis. Involved in lipopolysaccharide (LPS) biosynthesis. Catalyzes the transfer of 3-deoxy-D-manno-octulosonate (Kdo) residue(s) from CMP-Kdo to lipid IV(A), the tetraacyldisaccharide-1,4'-bisphosphate precursor of lipid A. In Rickettsia prowazekii (strain Madrid E), this protein is 3-deoxy-D-manno-octulosonic acid transferase (waaA).